Here is a 49-residue protein sequence, read N- to C-terminus: Large ribosomal subunit protein bL33B (49 aa).

It belongs to the bacterial ribosomal protein bL33 family.

The protein is Large ribosomal subunit protein bL33B (rpmGB) of Bacillus licheniformis.